A 1135-amino-acid chain; its full sequence is WASH complex subunit 4 (1135 aa).

An N-acetylalanine modification is found at Ala-2.

This sequence belongs to the SWIP family. In terms of assembly, probable component of the WASH complex.

The sequence is that of WASH complex subunit 4 from Dictyostelium discoideum (Social amoeba).